Here is a 1182-residue protein sequence, read N- to C-terminus: Tyrosine-protein kinase ABL2 (1182 aa).

Disordered regions lie at residues 1–47 and 60–80; these read MGQQ…TGFN and EDGF…HRPY. Gly-2 is lipidated: N-myristoyl glycine. Positions 2–106 are CAP; the sequence is GQQVGRVGEA…SKENLLGATE (105 aa). Over residues 20–30 the composition is skewed to low complexity; the sequence is RGIRGSSAARP. Ser-97 carries the phosphoserine modification. The 61-residue stretch at 107–167 folds into the SH3 domain; that stretch reads SDPNLFVALY…PSNYITPVNS (61 aa). A phosphotyrosine mark is found at Tyr-116, Tyr-161, Tyr-174, Tyr-185, Tyr-218, and Tyr-231. In terms of domain architecture, SH2 spans 173-263; sequence WYHGPVSRSA…GLVTTLHYPA (91 aa). At Tyr-261 the chain carries Phosphotyrosine; by ABL1 and autocatalysis. Residue Tyr-272 is modified to Phosphotyrosine; by autocatalysis. Phosphoserine is present on Ser-275. One can recognise a Protein kinase domain in the interval 288-539; sequence ITMKHKLGGG…PSFAETHQAF (252 aa). An ATP-binding site is contributed by 294 to 302; it reads LGGGQYGEV. A phosphotyrosine mark is found at Tyr-299 and Tyr-303. ATP is bound by residues Lys-317 and 362–368; that span reads EYMPYGN. The Proton acceptor role is filled by Asp-409. The short motif at 427–451 is the Kinase activation loop element; it reads DFGLSRLMTGDTYTAHAGAKFPIKW. Tyr-439 is subject to Phosphotyrosine; by autocatalysis and SRC-type Tyr-kinases. The residue at position 459 (Tyr-459) is a Phosphotyrosine. Tyr-568 is subject to Phosphotyrosine; by autocatalysis. Positions 611-641 are disordered; it reads IRGAQASSGSPALPRKQRDKSPSSLLEDAKE. Ser-620, Ser-631, and Ser-633 each carry phosphoserine. Asp-647 bears the Phosphotyrosine mark. The tract at residues 654-674 is disordered; it reads SSFMKKRNAPTPPKRSSSFRE. Position 655 is a phosphoserine (Ser-655). The short motif at 658–660 is the Nuclear localization signal element; sequence KKR. A phosphotyrosine mark is found at Ala-662 and Arg-668. Phosphoserine occurs at positions 669, 670, and 671. Phosphotyrosine occurs at positions 683 and 718. Tyr-683 carries the phosphotyrosine; by autocatalysis modification. Residues 694–930 are F-actin-binding; that stretch reads SLQHADGFSF…PVLPTTHNHK (237 aa). The tract at residues 763–794 is disordered; that stretch reads LRAGKPTASDDTSKPFPRSNSTSSMSSGLPEQ. N6-acetyllysine is present on Lys-776. The span at 780–791 shows a compositional bias: polar residues; the sequence is RSNSTSSMSSGL. Position 783 is a phosphoserine (Ser-783). Residue Thr-800 is modified to Phosphothreonine. Residues 807-823 show a composition bias toward polar residues; that stretch reads RSKLQLERTVSTSSQPE. Residues 807–851 are disordered; sequence RSKLQLERTVSTSSQPEENVDRANDMLPKKSEESAAPSRERPKAK. A phosphoserine mark is found at Ser-817 and Ser-820. Residues 825–849 show a composition bias toward basic and acidic residues; sequence NVDRANDMLPKKSEESAAPSRERPK. Ser-915 and Ser-936 each carry phosphoserine. Residues 964 to 1024 form a disordered region; that stretch reads HQVTSSGDKD…TSETQEGGKK (61 aa). Residues 1010-1019 are compositionally biased toward polar residues; that stretch reads TAGQSTSETQ. The tract at residues 1020-1182 is F-actin-binding; the sequence is EGGKKAALGA…VQEISDVVQR (163 aa).

It belongs to the protein kinase superfamily. Tyr protein kinase family. ABL subfamily. As to quaternary structure, interacts with PSMA7. Interacts with CTTN. Found in a complex with ABL1, ABL2, CRK and UNC119; leading to the inhibition of CRK phosphorylation by ABL kinases. It depends on Mg(2+) as a cofactor. Requires Mn(2+) as cofactor. In terms of processing, phosphorylated at Tyr-261 by ABL1 in response to oxidative stress. Phosphorylated by PDGFRB. Polyubiquitinated. Polyubiquitination of ABL2 leads to degradation. As to expression, widely expressed.

It is found in the cytoplasm. The protein localises to the cytoskeleton. The enzyme catalyses L-tyrosyl-[protein] + ATP = O-phospho-L-tyrosyl-[protein] + ADP + H(+). Its activity is regulated as follows. Stabilized in the inactive form by an association between the SH3 domain and the SH2-TK linker region, interactions of the N-terminal cap, and contributions from an N-terminal myristoyl group and phospholipids. Activated by autophosphorylation as well as by SRC-family kinase-mediated phosphorylation. Activated by RIN1 binding to the SH2 and SH3 domains. Inhibited by imatinib mesylate (Gleevec) which is used for the treatment of chronic myeloid leukemia (CML). Phosphatidylinositol 4,5-bisphosphate (PIP2), a highly abundant phosphoinositide known to regulate cytoskeletal and membrane proteins, inhibits the tyrosine kinase activity. Non-receptor tyrosine-protein kinase that plays an ABL1-overlapping role in key processes linked to cell growth and survival such as cytoskeleton remodeling in response to extracellular stimuli, cell motility and adhesion and receptor endocytosis. Coordinates actin remodeling through tyrosine phosphorylation of proteins controlling cytoskeleton dynamics like MYH10 (involved in movement); CTTN (involved in signaling); or TUBA1 and TUBB (microtubule subunits). Binds directly F-actin and regulates actin cytoskeletal structure through its F-actin-bundling activity. Involved in the regulation of cell adhesion and motility through phosphorylation of key regulators of these processes such as CRK, CRKL, DOK1 or ARHGAP35. Adhesion-dependent phosphorylation of ARHGAP35 promotes its association with RASA1, resulting in recruitment of ARHGAP35 to the cell periphery where it inhibits RHO. Phosphorylates multiple receptor tyrosine kinases like PDGFRB and other substrates which are involved in endocytosis regulation such as RIN1. In brain, may regulate neurotransmission by phosphorylating proteins at the synapse. ABL2 also acts as a regulator of multiple pathological signaling cascades during infection. Pathogens can highjack ABL2 kinase signaling to reorganize the host actin cytoskeleton for multiple purposes, like facilitating intracellular movement and host cell exit. Finally, functions as its own regulator through autocatalytic activity as well as through phosphorylation of its inhibitor, ABI1. Positively regulates chemokine-mediated T-cell migration, polarization, and homing to lymph nodes and immune-challenged tissues, potentially via activation of NEDD9/HEF1 and RAP1. In Homo sapiens (Human), this protein is Tyrosine-protein kinase ABL2 (ABL2).